The primary structure comprises 474 residues: Aspartyl/glutamyl-tRNA(Asn/Gln) amidotransferase subunit B (474 aa).

This sequence belongs to the GatB/GatE family. GatB subfamily. In terms of assembly, heterotrimer of A, B and C subunits.

The catalysed reaction is L-glutamyl-tRNA(Gln) + L-glutamine + ATP + H2O = L-glutaminyl-tRNA(Gln) + L-glutamate + ADP + phosphate + H(+). The enzyme catalyses L-aspartyl-tRNA(Asn) + L-glutamine + ATP + H2O = L-asparaginyl-tRNA(Asn) + L-glutamate + ADP + phosphate + 2 H(+). In terms of biological role, allows the formation of correctly charged Asn-tRNA(Asn) or Gln-tRNA(Gln) through the transamidation of misacylated Asp-tRNA(Asn) or Glu-tRNA(Gln) in organisms which lack either or both of asparaginyl-tRNA or glutaminyl-tRNA synthetases. The reaction takes place in the presence of glutamine and ATP through an activated phospho-Asp-tRNA(Asn) or phospho-Glu-tRNA(Gln). The chain is Aspartyl/glutamyl-tRNA(Asn/Gln) amidotransferase subunit B from Helicobacter hepaticus (strain ATCC 51449 / 3B1).